An 83-amino-acid chain; its full sequence is U15-theraphotoxin-Cg1a (83 aa).

A signal peptide spans 1–21; that stretch reads MKAAILLAFAGLALLSVICHA. The propeptide occupies 22–49; it reads SENVEQDSFEEVFSAIFAMEDDLKPKER. Cystine bridges form between Cys51-Cys66, Cys58-Cys71, and Cys65-Cys77. An Alanine amide modification is found at Ala81.

The protein belongs to the neurotoxin 10 (Hwtx-1) family. 66 (Jztx-24) subfamily. In terms of tissue distribution, expressed by the venom gland.

Its subcellular location is the secreted. In terms of biological role, probable ion channel inhibitor. The sequence is that of U15-theraphotoxin-Cg1a from Chilobrachys guangxiensis (Chinese earth tiger tarantula).